Here is a 445-residue protein sequence, read N- to C-terminus: Putative diacyglycerol O-acyltransferase Rv2285 (445 aa).

The active-site Proton acceptor is His135.

Belongs to the long-chain O-acyltransferase family.

The enzyme catalyses an acyl-CoA + a 1,2-diacyl-sn-glycerol = a triacyl-sn-glycerol + CoA. The catalysed reaction is di-(9Z)-octadecenoylglycerol + (9Z)-octadecenoyl-CoA = 1,2,3-tri-(9Z-octadecenoyl)-glycerol + CoA. The protein operates within glycerolipid metabolism; triacylglycerol biosynthesis. Catalyzes the terminal and only committed step in triacylglycerol synthesis by using diacylglycerol and fatty acyl CoA as substrates. Required for storage lipid synthesis. In terms of biological role, upon expression in E.coli functions weakly as a triacylglycerol synthase, making triacylglycerol (TG) from diolein and long-chain fatty acyl-CoA. Has very weak wax synthase activity, incorporating palmityl alcohol into wax esters in the presence of palmitoyl-CoA. This Mycobacterium tuberculosis (strain ATCC 25618 / H37Rv) protein is Putative diacyglycerol O-acyltransferase Rv2285.